We begin with the raw amino-acid sequence, 210 residues long: Thymidylate kinase (210 aa).

13-20 contributes to the ATP binding site; it reads GLEGAGKS.

It belongs to the thymidylate kinase family.

It catalyses the reaction dTMP + ATP = dTDP + ADP. Functionally, phosphorylation of dTMP to form dTDP in both de novo and salvage pathways of dTTP synthesis. This Shewanella loihica (strain ATCC BAA-1088 / PV-4) protein is Thymidylate kinase.